The chain runs to 619 residues: Calnexin (619 aa).

Residues 1-21 (MVNRKWMYIFIQFLLVSSIRS) form the signal peptide. Position 109 (D109) interacts with Ca(2+). C152 and C186 form a disulfide bridge. An alpha-D-glucoside contacts are provided by Y156, K158, Y177, and D184. N203 carries N-linked (GlcNAc...) asparagine glycosylation. A p domain (Extended arm) region spans residues 268-401 (IFDETDLKPV…RLIDNPNYFE (134 aa)). 5 repeat units span residues 270-282 (DETD…WDER), 287-299 (DESA…WDEN), 306-318 (DEAA…WNEE), 325-337 (DPEA…WDED), and 340-350 (GSWEAPLIDNP). 4 X approximate repeats regions lie at residues 270–337 (DETD…WDED) and 340–397 (GSWE…IDNP). C352 and C358 are oxidised to a cystine. Repeat copies occupy residues 359-369 (GTWKAPTIKNP), 373-383 (GKWIRPKISNP), and 387-397 (GKWTARLIDNP). E417 lines the an alpha-D-glucoside pocket. D428 lines the Ca(2+) pocket. The helical transmembrane segment at 481 to 501 (LWAVYILCVLLPLVAIGVFCF) threads the bilayer. Residues 538 to 619 (GDEEDDVNQP…AKRRTARRGD (82 aa)) are disordered. A compositionally biased stretch (polar residues) spans 547–557 (PGPSGSQSNPE). Residues 566–577 (EQQSANSSQSSA) are compositionally biased toward low complexity. Residue N571 is glycosylated (N-linked (GlcNAc...) asparagine). A compositionally biased stretch (basic and acidic residues) spans 585–601 (HVVPENEPVKPTEEFAK). Positions 610 to 619 (AKRRTARRGD) are enriched in basic residues.

This sequence belongs to the calreticulin family. Post-translationally, glycosylation is important for its biological activity. Expressed ubiquitously in every blastomere of the embryo up to the gastrulation stage. Expression becomes gradually restricted to the head and tail regions at the comma stage during embryogenesis. During postembryonic development, expressed prominently in the H-shaped excretory cell, in the neurons of head (including ASK and ADL) and tail (including PHA and PHB), in the dorsal and ventral nerve cords, and in the spermatheca. Expressed in the spicules of the male tail (at protein level).

Its subcellular location is the endoplasmic reticulum membrane. The protein resides in the cytoplasm. It is found in the perinuclear region. The protein localises to the cytoplasmic vesicle. Its function is as follows. Calcium-binding protein that interacts with newly synthesized monoglucosylated glycoproteins in the endoplasmic reticulum. It may act in assisting protein assembly and/or in the retention within the ER of unassembled protein subunits. It seems to play a major role in the quality control apparatus of the ER by the retention of incorrectly folded proteins. Required for embryogenesis and larval development under heat and ER stress conditions. May be important for germ cell development. Involved in neuronal necrotic cell death. In Caenorhabditis elegans, this protein is Calnexin (cnx-1).